Reading from the N-terminus, the 256-residue chain is Large ribosomal subunit protein bL28m (256 aa).

The transit peptide at 1–55 (MPLHKYPVWLWKRLQLREGICSRLPGHYLRSLEEERTPTPVHYRPHGAKFKINPK) directs the protein to the mitochondrion.

Belongs to the bacterial ribosomal protein bL28 family. In terms of assembly, component of the mitochondrial large ribosomal subunit (mt-LSU). Mature mammalian 55S mitochondrial ribosomes consist of a small (28S) and a large (39S) subunit. The 28S small subunit contains a 12S ribosomal RNA (12S mt-rRNA) and 30 different proteins. The 39S large subunit contains a 16S rRNA (16S mt-rRNA), a copy of mitochondrial valine transfer RNA (mt-tRNA(Val)), which plays an integral structural role, and 52 different proteins. Interacts with OXA1L. In terms of tissue distribution, found in a variety of normal tissues including spleen, testes, thymus, liver, kidney, brain, adrenal, lung and retinal tissue.

The protein resides in the mitochondrion. This chain is Large ribosomal subunit protein bL28m (MRPL28), found in Homo sapiens (Human).